The chain runs to 640 residues: MTIPCSRPLFIEPFDLYLFGMGRHRHLYRILGAHPAVQDGEAGYRFAVWAPNARSVHLSGDCNGWRHEGCPLFPVGVSGVWAAFVPGVRRGSLYKFVVRGADGRQEQKADPFALWAEMRPGVASVAWDIDNHAWGDGAWMAERARQGLPLERPVSIYEVHLGSWRRRHGDGHPFLTYDELGDQLIPYATGMGFTHLELLPVAEHPLDQSWGYQTGHYYAPTSRFGSPEGFKRFVDRCHQAGLGVILDWVPAHFPRDAWSLGRFDGTALYEHLDPRLGEHPDWGTYIFNYGRNEVRNFLTANALYWLREFHIDGLRMDAVASMLYLDYSREAGQWLPNRHGGRENLDAVDFLREVNTVIHAEFPGAMTLAEESTAWPGVSRPVYTGGLGFSFKWNMGWMHDTLGYLAEDPIHRAYHHGSLTFSMLYAFSENFVLPLSHDEVVHGKGALLSKMPGDMWQQQANLRLLYAYQWAHPGKKLLFMGGEFGQWNEWDESRELDWCLYRFPAHEGIARLVGDLNRLLRSEPAMHRRDHDWSGFRWVDFADYGSSVISFLRLAEGERPLLWIFNFTPVVRRFYRVPCPRGGTWRELCNTDSAYYGGSDVGNAGAVMAREDHWGGGHFIELTLPPLAAMCFAPVTGQGT.

The Nucleophile role is filled by aspartate 317. Glutamate 370 functions as the Proton donor in the catalytic mechanism.

Belongs to the glycosyl hydrolase 13 family. GlgB subfamily. As to quaternary structure, monomer.

It carries out the reaction Transfers a segment of a (1-&gt;4)-alpha-D-glucan chain to a primary hydroxy group in a similar glucan chain.. Its pathway is glycan biosynthesis; glycogen biosynthesis. Catalyzes the formation of the alpha-1,6-glucosidic linkages in glycogen by scission of a 1,4-alpha-linked oligosaccharide from growing alpha-1,4-glucan chains and the subsequent attachment of the oligosaccharide to the alpha-1,6 position. This chain is 1,4-alpha-glucan branching enzyme GlgB, found in Nitratidesulfovibrio vulgaris (strain DP4) (Desulfovibrio vulgaris).